The sequence spans 178 residues: Large ribosomal subunit protein uL6 (178 aa).

Belongs to the universal ribosomal protein uL6 family. As to quaternary structure, part of the 50S ribosomal subunit.

This protein binds to the 23S rRNA, and is important in its secondary structure. It is located near the subunit interface in the base of the L7/L12 stalk, and near the tRNA binding site of the peptidyltransferase center. The sequence is that of Large ribosomal subunit protein uL6 from Helicobacter pylori (strain J99 / ATCC 700824) (Campylobacter pylori J99).